The chain runs to 120 residues: UPF0231 protein YE0706 (120 aa).

Belongs to the UPF0231 family.

The sequence is that of UPF0231 protein YE0706 from Yersinia enterocolitica serotype O:8 / biotype 1B (strain NCTC 13174 / 8081).